The chain runs to 365 residues: Coxsackievirus and adenovirus receptor (365 aa).

An N-terminal signal peptide occupies residues M1–S19. Ig-like C2-type domains follow at residues L20–H134 and P141–N228. The Extracellular portion of the chain corresponds to L20–G237. Cystine bridges form between C41–C120 and C162–C212. N-linked (GlcNAc...) asparagine glycans are attached at residues N106 and N201. The chain crosses the membrane as a helical span at residues L238 to F258. 2 S-palmitoyl cysteine lipidation sites follow: C259 and C260. The Cytoplasmic portion of the chain corresponds to C259 to V365. The segment covering Y269 to P282 has biased composition (basic and acidic residues). A disordered region spans residues Y269–P343. Residues S286 to P322 show a composition bias toward polar residues. A phosphoserine mark is found at S297, S304, S306, S323, S332, and S363. The short motif at K360 to V365 is the PDZ-binding element.

As to quaternary structure, monomer. May form homodimer. Interacts with LNX, MAGI1, DLG4, PRKCABP, TJP1 and CTNNB1. Interacts with MPDZ; recruits MPDZ to intercellular contact sites. Interacts with JAML (homodimeric form). Secreted isoform 3, isoform 4 and isoform 5 can interact with the extracellular domain of the receptor. (Microbial infection) Interacts with adenovirus subgroups A, C, D, E and F fiber proteins as well as coxsackievirus B1, B2, B3, B4, B5 and B6 capsid proteins. In terms of processing, N-glycosylated. Post-translationally, palmitoylated on Cys-259 and/or Cys-260; required for proper localization to the plasma membrane. Expressed in pancreas, brain, heart, small intestine, testis, prostate and at a lower level in liver and lung. Isoform 5 is ubiquitously expressed. Isoform 3 is expressed in heart, lung and pancreas. In skeletal muscle, isoform 1 is found at the neuromuscular junction and isoform 2 is found in blood vessels. In cardiac muscle, isoform 1 and isoform 2 are found at intercalated disks. In heart expressed in subendothelial layers of the vessel wall but not in the luminal endothelial surface. Expression is elevated in hearts with dilated cardiomyopathy.

Its subcellular location is the cell membrane. It localises to the basolateral cell membrane. It is found in the cell junction. The protein localises to the tight junction. The protein resides in the adherens junction. Its subcellular location is the secreted. Functionally, component of the epithelial apical junction complex that may function as a homophilic cell adhesion molecule and is essential for tight junction integrity. Also involved in transepithelial migration of leukocytes through adhesive interactions with JAML a transmembrane protein of the plasma membrane of leukocytes. The interaction between both receptors also mediates the activation of gamma-delta T-cells, a subpopulation of T-cells residing in epithelia and involved in tissue homeostasis and repair. Upon epithelial CXADR-binding, JAML induces downstream cell signaling events in gamma-delta T-cells through PI3-kinase and MAP kinases. It results in proliferation and production of cytokines and growth factors by T-cells that in turn stimulate epithelial tissues repair. (Microbial infection) Acts as a receptor for adenovirus type C. Its function is as follows. (Microbial infection) Acts as a receptor for Coxsackievirus B1 to B6. The protein is Coxsackievirus and adenovirus receptor (CXADR) of Homo sapiens (Human).